The sequence spans 283 residues: Cyclin-C (283 aa).

A Cyclin N-terminal domain is found at 46–144 (NVIQALGEHL…ILECEFYLLE (99 aa)). The interval 252–283 (TILSKMPKPKPPPNSEGEQGPNGSQNSSYSQS) is disordered. A compositionally biased stretch (polar residues) spans 272–283 (PNGSQNSSYSQS). S275 carries the phosphoserine modification.

It belongs to the cyclin family. Cyclin C subfamily. Component of the Mediator complex, which is composed of MED1, MED4, MED6, MED7, MED8, MED9, MED10, MED11, MED12, MED13, MED13L, MED14, MED15, MED16, MED17, MED18, MED19, MED20, MED21, MED22, MED23, MED24, MED25, MED26, MED27, MED29, MED30, MED31, CCNC, CDK8 and CDC2L6/CDK11. The MED12, MED13, CCNC and CDK8 subunits form a distinct module termed the CDK8 module. Mediator containing the CDK8 module is less active than Mediator lacking this module in supporting transcriptional activation. Individual preparations of the Mediator complex lacking one or more distinct subunits have been variously termed ARC, CRSP, DRIP, PC2, SMCC and TRAP. The cylin/CDK pair formed by CCNC/CDK8 also associates with the large subunit of RNA polymerase II. As to expression, highest levels in pancreas. High levels in heart, liver, skeletal muscle and kidney. Low levels in brain.

The protein resides in the nucleus. Functionally, component of the Mediator complex, a coactivator involved in regulated gene transcription of nearly all RNA polymerase II-dependent genes. Mediator functions as a bridge to convey information from gene-specific regulatory proteins to the basal RNA polymerase II transcription machinery. Mediator is recruited to promoters by direct interactions with regulatory proteins and serves as a scaffold for the assembly of a functional preinitiation complex with RNA polymerase II and the general transcription factors. Binds to and activates cyclin-dependent kinase CDK8 that phosphorylates the CTD (C-terminal domain) of the large subunit of RNA polymerase II (RNAp II), which may inhibit the formation of a transcription initiation complex. This is Cyclin-C (CCNC) from Homo sapiens (Human).